A 545-amino-acid chain; its full sequence is Ubiquitin carboxyl-terminal hydrolase 17-like protein D (545 aa).

Residues Cys51–Gln348 enclose the USP domain. The active-site Nucleophile is the Cys60. The active-site Proton acceptor is His307. 2 disordered regions span residues Leu367–Gln443 and Arg521–Arg545. The span at Lys374 to Ser385 shows a compositional bias: basic residues. Basic and acidic residues predominate over residues Glu393 to Lys404. The span at Gly524–Gln537 shows a compositional bias: basic residues.

It belongs to the peptidase C19 family. USP17 subfamily. As to expression, detected in T-cell, myeloid, and embryonic stem cell lines.

It is found in the nucleus. The protein resides in the endoplasmic reticulum. It catalyses the reaction Thiol-dependent hydrolysis of ester, thioester, amide, peptide and isopeptide bonds formed by the C-terminal Gly of ubiquitin (a 76-residue protein attached to proteins as an intracellular targeting signal).. Its function is as follows. Deubiquitinating enzyme that removes conjugated ubiquitin from specific proteins to regulate different cellular processes that may include cell proliferation, progression through the cell cycle, apoptosis, cell migration, and the cellular response to viral infection. This is Ubiquitin carboxyl-terminal hydrolase 17-like protein D from Mus musculus (Mouse).